Consider the following 221-residue polypeptide: Ribose-5-phosphate isomerase A (221 aa).

Substrate contacts are provided by residues 26-29 (TGST), 81-84 (DGAD), and 94-97 (KGGG). The active-site Proton acceptor is the E103. K121 serves as a coordination point for substrate.

The protein belongs to the ribose 5-phosphate isomerase family. As to quaternary structure, homodimer.

The catalysed reaction is aldehydo-D-ribose 5-phosphate = D-ribulose 5-phosphate. It participates in carbohydrate degradation; pentose phosphate pathway; D-ribose 5-phosphate from D-ribulose 5-phosphate (non-oxidative stage): step 1/1. Functionally, catalyzes the reversible conversion of ribose-5-phosphate to ribulose 5-phosphate. This chain is Ribose-5-phosphate isomerase A, found in Bacillus mycoides (strain KBAB4) (Bacillus weihenstephanensis).